We begin with the raw amino-acid sequence, 253 residues long: MSLVCSVIFIHHAFNANILYKDYAFSDGEILMVDNAVRTHFEPYERHFKEIGFNENTIKKYLQCTNIQTVTVPVPAKFLRASNVPTGLLNEMIAYLNSEERNHHNFSELLLFSCLSIFAACKGFITLLTNGVLSVSGKVRNIVNMKLAHPWKLKDICDCLYISESLLKKKLKQEQTTFSQILLDARMQHAKNLIRVEGSVNKIAEQCGYASTSYFIYAFRKHFGNSPKRVSKEYRCQRRTGMNTDNTMNALAI.

Residues 137–233 form the HTH araC/xylS-type domain; the sequence is GKVRNIVNMK…GNSPKRVSKE (97 aa). 2 consecutive DNA-binding regions (H-T-H motif) follow at residues 154-175 and 200-223; these read KDIC…KQEQ and VNKI…RKHF.

Induces the expression of gadE and mdtEF. Could also regulate the expression of other genes involved in acid resistance. The polypeptide is HTH-type transcriptional regulator YdeO (ydeO) (Escherichia coli O6:H1 (strain CFT073 / ATCC 700928 / UPEC)).